A 361-amino-acid chain; its full sequence is Phosphate acyltransferase (361 aa).

Residues 340–361 (VPADGAATEQGPTPRRIAPPRT) are disordered.

It belongs to the PlsX family. As to quaternary structure, homodimer. Probably interacts with PlsY.

It is found in the cytoplasm. It catalyses the reaction a fatty acyl-[ACP] + phosphate = an acyl phosphate + holo-[ACP]. It participates in lipid metabolism; phospholipid metabolism. Catalyzes the reversible formation of acyl-phosphate (acyl-PO(4)) from acyl-[acyl-carrier-protein] (acyl-ACP). This enzyme utilizes acyl-ACP as fatty acyl donor, but not acyl-CoA. The sequence is that of Phosphate acyltransferase from Anaeromyxobacter dehalogenans (strain 2CP-1 / ATCC BAA-258).